A 505-amino-acid chain; its full sequence is Histidine ammonia-lyase (505 aa).

A cross-link (5-imidazolinone (Ala-Gly)) is located at residues 141–143 (ASG). 2,3-didehydroalanine (Ser) is present on Ser142.

This sequence belongs to the PAL/histidase family. Contains an active site 4-methylidene-imidazol-5-one (MIO), which is formed autocatalytically by cyclization and dehydration of residues Ala-Ser-Gly.

The protein resides in the cytoplasm. It catalyses the reaction L-histidine = trans-urocanate + NH4(+). Its pathway is amino-acid degradation; L-histidine degradation into L-glutamate; N-formimidoyl-L-glutamate from L-histidine: step 1/3. The sequence is that of Histidine ammonia-lyase from Bacillus thuringiensis subsp. konkukian (strain 97-27).